Consider the following 186-residue polypeptide: Ribosome-recycling factor (186 aa).

It belongs to the RRF family.

It localises to the cytoplasm. In terms of biological role, responsible for the release of ribosomes from messenger RNA at the termination of protein biosynthesis. May increase the efficiency of translation by recycling ribosomes from one round of translation to another. In Bartonella tribocorum (strain CIP 105476 / IBS 506), this protein is Ribosome-recycling factor.